A 661-amino-acid chain; its full sequence is CD180 antigen (661 aa).

The N-terminal stretch at M1–A20 is a signal peptide. Residues T21–S626 lie on the Extracellular side of the membrane. Residues V33–N53 enclose the LRRNT domain. N-linked (GlcNAc...) asparagine glycosylation is found at N34, N53, N70, and N78. 7 LRR repeats span residues S54–R75, N78–S99, R102–G123, A126–N147, T150–P171, K174–S195, and N201–S221. N-linked (GlcNAc...) asparagine glycans are attached at residues N201, N244, and N288. LRR repeat units follow at residues S275–C296, G299–S321, T322–N343, S346–L366, and N371–Q391. 2 N-linked (GlcNAc...) asparagine glycosylation sites follow: N394 and N402. LRR repeat units lie at residues H397–E418, Q421–Q442, L446–D466, A470–Q493, R497–S518, M521–K544, and I546–L566. An N-linked (GlcNAc...) asparagine glycan is attached at N451. The LRRCT domain maps to N577 to M627. The helical transmembrane segment at M627–V650 threads the bilayer. Residues K651–I661 lie on the Cytoplasmic side of the membrane.

Belongs to the Toll-like receptor family. M-shaped tetramer of two CD180-LY86 heterodimers. B-lymphocytes and spleen. Not detected in thymus, kidney, muscle, heart, brain or liver.

It is found in the cell membrane. In terms of biological role, may cooperate with MD-1 and TLR4 to mediate the innate immune response to bacterial lipopolysaccharide (LPS) in B-cells. Leads to NF-kappa-B activation. Also involved in the life/death decision of B-cells. This Mus musculus (Mouse) protein is CD180 antigen (Cd180).